We begin with the raw amino-acid sequence, 252 residues long: Cilia- and flagella-associated protein 300 (252 aa).

This sequence belongs to the CFAP300 family.

The protein localises to the cytoplasm. Its subcellular location is the cytoskeleton. It is found in the cilium axoneme. Cilium- and flagellum-specific protein that plays a role in axonemal structure organization and motility. Plays a role in outer and inner axonemal dynein arm assembly. The protein is Cilia- and flagella-associated protein 300 of Paramecium tetraurelia.